Here is a 283-residue protein sequence, read N- to C-terminus: Release factor glutamine methyltransferase (283 aa).

Residues 121-125 (GTGSG), D144, and N188 contribute to the S-adenosyl-L-methionine site. 188–191 (NPPY) provides a ligand contact to substrate.

This sequence belongs to the protein N5-glutamine methyltransferase family. PrmC subfamily.

It catalyses the reaction L-glutaminyl-[peptide chain release factor] + S-adenosyl-L-methionine = N(5)-methyl-L-glutaminyl-[peptide chain release factor] + S-adenosyl-L-homocysteine + H(+). In terms of biological role, methylates the class 1 translation termination release factors RF1/PrfA and RF2/PrfB on the glutamine residue of the universally conserved GGQ motif. This Bacillus cereus (strain ATCC 14579 / DSM 31 / CCUG 7414 / JCM 2152 / NBRC 15305 / NCIMB 9373 / NCTC 2599 / NRRL B-3711) protein is Release factor glutamine methyltransferase.